Here is a 274-residue protein sequence, read N- to C-terminus: Merozoite surface protein 2 (274 aa).

Positions 1 to 20 (MKVIKTLSIINFFIFVTFNI) are cleaved as a signal peptide. Residues Asn-22 and Asn-36 are each glycosylated (N-linked (GlcNAc...) asparagine). Residues 43–234 (MAESKPPTGT…SDSQKECTDG (192 aa)) are disordered. The segment at 44–200 (AESKPPTGTG…EQTESPELQS (157 aa)) is polymorphic region. 2 tandem repeats follow at residues 53-62 (GASGSAGSGA) and 63-72 (GASGSAGSGD). The interval 53–72 (GASGSAGSGAGASGSAGSGD) is 2 X 10 AA tandem repeats of G-A-S-G-S-A-G-S-G-[AD]. The span at 53 to 72 (GASGSAGSGAGASGSAGSGD) shows a compositional bias: gly residues. Low complexity predominate over residues 91–121 (SSSTPATTTTTTTTTTTTTTNDAEASTSTSS). Polar residues-rich tracts occupy residues 122–131 (ENPNHNNAET), 140–167 (QKSN…NVPP), and 174–202 (KSPT…QSAP). N-linked (GlcNAc...) asparagine glycosylation occurs at Asn-151. Asn-223 carries an N-linked (GlcNAc...) asparagine glycan. Cys-231 and Cys-239 are joined by a disulfide. Residue Asn-248 is glycosylated (N-linked (GlcNAc...) asparagine). Asn-248 carries GPI-anchor amidated asparagine lipidation. Positions 249–274 (SSNIASINKFVVLISAKLVLSFAIFI) are cleaved as a propeptide — removed in mature form.

Its subcellular location is the cell membrane. Its function is as follows. May play a role in the merozoite attachment to the erythrocyte. This Plasmodium falciparum (isolate kf1916) protein is Merozoite surface protein 2.